A 189-amino-acid chain; its full sequence is GTP cyclohydrolase 1 (189 aa).

Residues C78, H81, and C150 each coordinate Zn(2+).

Belongs to the GTP cyclohydrolase I family. In terms of assembly, toroid-shaped homodecamer, composed of two pentamers of five dimers.

The catalysed reaction is GTP + H2O = 7,8-dihydroneopterin 3'-triphosphate + formate + H(+). Its pathway is cofactor biosynthesis; 7,8-dihydroneopterin triphosphate biosynthesis; 7,8-dihydroneopterin triphosphate from GTP: step 1/1. The polypeptide is GTP cyclohydrolase 1 (Listeria monocytogenes serovar 1/2a (strain ATCC BAA-679 / EGD-e)).